The sequence spans 479 residues: tRNA modification GTPase MnmE (479 aa).

Arginine 30, glutamate 91, and lysine 130 together coordinate (6S)-5-formyl-5,6,7,8-tetrahydrofolate. The TrmE-type G domain occupies 226–402 (GFRIVLTGLP…VLKDLVKEFA (177 aa)). Asparagine 236 provides a ligand contact to K(+). Residues 236-241 (NVGKSS), 255-261 (TDIPGTT), and 280-283 (DTAG) each bind GTP. Serine 240 is a Mg(2+) binding site. 3 residues coordinate K(+): threonine 255, isoleucine 257, and threonine 260. Threonine 261 contacts Mg(2+). Lysine 479 contacts (6S)-5-formyl-5,6,7,8-tetrahydrofolate.

The protein belongs to the TRAFAC class TrmE-Era-EngA-EngB-Septin-like GTPase superfamily. TrmE GTPase family. In terms of assembly, homodimer. Heterotetramer of two MnmE and two MnmG subunits. Requires K(+) as cofactor.

The protein localises to the cytoplasm. Functionally, exhibits a very high intrinsic GTPase hydrolysis rate. Involved in the addition of a carboxymethylaminomethyl (cmnm) group at the wobble position (U34) of certain tRNAs, forming tRNA-cmnm(5)s(2)U34. In Bdellovibrio bacteriovorus (strain ATCC 15356 / DSM 50701 / NCIMB 9529 / HD100), this protein is tRNA modification GTPase MnmE.